Reading from the N-terminus, the 520-residue chain is GMP synthase [glutamine-hydrolyzing] (520 aa).

Residues 9–202 (TILIIDFGSQ…VHRIVGVKPG (194 aa)) enclose the Glutamine amidotransferase type-1 domain. The active-site Nucleophile is cysteine 86. Catalysis depends on residues histidine 176 and glutamate 178. The 193-residue stretch at 203 to 395 (WTMGAYREQA…LGLPDSFIGR (193 aa)) folds into the GMPS ATP-PPase domain. 230–236 (SGGVDSS) contacts ATP.

In terms of assembly, homodimer.

It catalyses the reaction XMP + L-glutamine + ATP + H2O = GMP + L-glutamate + AMP + diphosphate + 2 H(+). Its pathway is purine metabolism; GMP biosynthesis; GMP from XMP (L-Gln route): step 1/1. Functionally, catalyzes the synthesis of GMP from XMP. The polypeptide is GMP synthase [glutamine-hydrolyzing] (Brucella melitensis biotype 2 (strain ATCC 23457)).